Here is a 235-residue protein sequence, read N- to C-terminus: 7-cyano-7-deazaguanine synthase (235 aa).

9–19 (FSGGQDSTTCL) is a binding site for ATP. Zn(2+)-binding residues include cysteine 197, cysteine 212, cysteine 215, and cysteine 218.

The protein belongs to the QueC family. It depends on Zn(2+) as a cofactor.

It catalyses the reaction 7-carboxy-7-deazaguanine + NH4(+) + ATP = 7-cyano-7-deazaguanine + ADP + phosphate + H2O + H(+). It functions in the pathway purine metabolism; 7-cyano-7-deazaguanine biosynthesis. Catalyzes the ATP-dependent conversion of 7-carboxy-7-deazaguanine (CDG) to 7-cyano-7-deazaguanine (preQ(0)). This Polaromonas sp. (strain JS666 / ATCC BAA-500) protein is 7-cyano-7-deazaguanine synthase.